The primary structure comprises 157 residues: Jacalin-related lectin 15 (157 aa).

Residues 13-152 form the Jacalin-type lectin domain; it reads ADKLEAKGGN…LTSLGAYFAP (140 aa).

This sequence belongs to the jacalin lectin family. Expressed in stems, leaves and flowers. Not detected in roots.

In terms of biological role, confers broad resistance to potexviruses. Inhibits virus accumulation at the cellular level. The chain is Jacalin-related lectin 15 (JAL15) from Arabidopsis thaliana (Mouse-ear cress).